An 83-amino-acid polypeptide reads, in one-letter code: Small ribosomal subunit protein uS17 (83 aa).

Belongs to the universal ribosomal protein uS17 family. In terms of assembly, part of the 30S ribosomal subunit.

In terms of biological role, one of the primary rRNA binding proteins, it binds specifically to the 5'-end of 16S ribosomal RNA. The chain is Small ribosomal subunit protein uS17 from Chlamydia muridarum (strain MoPn / Nigg).